The chain runs to 1008 residues: Collagen alpha-2(I) chain (1008 aa).

Residues glycine 1–phenylalanine 999 are disordered. Residues proline 9, proline 12, proline 45, and proline 51 each carry the 4-hydroxyproline modification. The segment covering leucine 38 to lysine 81 has biased composition (low complexity). Residues alanine 82–glutamate 94 are compositionally biased toward basic and acidic residues. Position 116 is a 5-hydroxylysine; alternate (lysine 116). Residue lysine 116 is glycosylated (O-linked (Gal...) hydroxylysine; alternate). 3 stretches are compositionally biased toward low complexity: residues valine 164–proline 193, proline 239–proline 260, and glutamate 301–serine 314. Residues glycine 336–glycine 345 are compositionally biased toward gly residues. Residues proline 358–serine 374 show a composition bias toward low complexity. A 4-hydroxyproline mark is found at proline 380 and proline 383. Residues leucine 409–alanine 428 are compositionally biased toward low complexity. A compositionally biased stretch (gly residues) spans glycine 455–glycine 466. Composition is skewed to low complexity over residues proline 513–proline 530 and glutamate 542–alanine 552. The span at glycine 553–glycine 562 shows a compositional bias: gly residues. Composition is skewed to low complexity over residues arginine 582–serine 629 and valine 636–alanine 656. The segment covering lysine 657 to lysine 666 has biased composition (basic and acidic residues). The span at proline 674 to alanine 684 shows a compositional bias: low complexity. Residues glycine 694–glycine 703 show a composition bias toward gly residues. Residues alanine 704–threonine 714 are compositionally biased toward low complexity. Positions glycine 751–glycine 760 are enriched in gly residues. 5 stretches are compositionally biased toward low complexity: residues serine 768 to proline 795, leucine 803 to proline 813, proline 826 to proline 842, tyrosine 862 to alanine 884, and glutamate 892 to proline 907. Basic and acidic residues predominate over residues arginine 917 to proline 928. Residues glycine 989–aspartate 998 are compositionally biased toward gly residues.

It belongs to the fibrillar collagen family. In terms of assembly, trimers of one alpha 2(I) and two alpha 1(I) chains. Interacts (via C-terminus) with TMEM131 (via PapD-L domain); the interaction is direct and is involved in assembly and TRAPPIII ER-to-Golgi transport complex-dependent secretion of collagen. Post-translationally, prolines at the third position of the tripeptide repeating unit (G-X-Y) are hydroxylated in some or all of the chains. Expressed in bones.

The protein localises to the secreted. It is found in the extracellular space. It localises to the extracellular matrix. Type I collagen is a member of group I collagen (fibrillar forming collagen). The polypeptide is Collagen alpha-2(I) chain (Nothrotheriops shastensis (Shasta ground sloth)).